The primary structure comprises 518 residues: Bifunctional purine biosynthesis protein PurH (518 aa).

The 146-residue stretch at 1 to 146 folds into the MGS-like domain; it reads MSPIALLSVS…KNHQDVLVVT (146 aa).

It belongs to the PurH family.

The catalysed reaction is (6R)-10-formyltetrahydrofolate + 5-amino-1-(5-phospho-beta-D-ribosyl)imidazole-4-carboxamide = 5-formamido-1-(5-phospho-D-ribosyl)imidazole-4-carboxamide + (6S)-5,6,7,8-tetrahydrofolate. The enzyme catalyses IMP + H2O = 5-formamido-1-(5-phospho-D-ribosyl)imidazole-4-carboxamide. Its pathway is purine metabolism; IMP biosynthesis via de novo pathway; 5-formamido-1-(5-phospho-D-ribosyl)imidazole-4-carboxamide from 5-amino-1-(5-phospho-D-ribosyl)imidazole-4-carboxamide (10-formyl THF route): step 1/1. The protein operates within purine metabolism; IMP biosynthesis via de novo pathway; IMP from 5-formamido-1-(5-phospho-D-ribosyl)imidazole-4-carboxamide: step 1/1. This chain is Bifunctional purine biosynthesis protein PurH, found in Prochlorococcus marinus (strain NATL1A).